Consider the following 382-residue polypeptide: Lipid-A-disaccharide synthase (382 aa).

This sequence belongs to the LpxB family.

It carries out the reaction 2-N,3-O-bis[(3R)-3-hydroxytetradecanoyl]-alpha-D-glucosaminyl 1-phosphate + UDP-2-N,3-O-bis[(3R)-3-hydroxytetradecanoyl]-alpha-D-glucosamine = lipid A disaccharide (E. coli) + UDP + H(+). It catalyses the reaction a lipid X + a UDP-2-N,3-O-bis[(3R)-3-hydroxyacyl]-alpha-D-glucosamine = a lipid A disaccharide + UDP + H(+). Its pathway is glycolipid biosynthesis; lipid IV(A) biosynthesis; lipid IV(A) from (3R)-3-hydroxytetradecanoyl-[acyl-carrier-protein] and UDP-N-acetyl-alpha-D-glucosamine: step 5/6. Condensation of UDP-2,3-diacylglucosamine and 2,3-diacylglucosamine-1-phosphate to form lipid A disaccharide, a precursor of lipid A, a phosphorylated glycolipid that anchors the lipopolysaccharide to the outer membrane of the cell. The protein is Lipid-A-disaccharide synthase of Salmonella arizonae (strain ATCC BAA-731 / CDC346-86 / RSK2980).